A 109-amino-acid chain; its full sequence is Putative antitoxin HigA3 (109 aa).

In terms of domain architecture, HTH cro/C1-type spans 41–97 (LAEIRKALGHARQADVAALMGVSQARVSKLESGDLSHTELGTLQAYVAALGGHLRIV). A DNA-binding region (H-T-H motif) is located at residues 53 to 72 (QADVAALMGVSQARVSKLES).

In terms of biological role, putative antitoxin component of a type II toxin-antitoxin (TA) system. Its cognate toxin would be HigB3. In Mycobacterium tuberculosis (strain ATCC 25618 / H37Rv), this protein is Putative antitoxin HigA3.